A 207-amino-acid chain; its full sequence is Gap junction epsilon-1 protein (207 aa).

Residues 1 to 22 (MSLNYIKNFYEGCLRPPTVIGQ) are Cytoplasmic-facing. A helical membrane pass occupies residues 23-43 (FHTLFFGSVRTFFLGVLGFAV). At 44 to 74 (YGNEALHFSCDPDKRELNLYCYNQFRPITPQ) the chain is on the extracellular side. Disulfide bonds link Cys53–Cys161 and Cys64–Cys147. Residues 75-95 (VFWALQLVTVLVPGAVFHLYA) traverse the membrane as a helical segment. Over 96 to 111 (ACKNIDQEEILHRPMS) the chain is Cytoplasmic. The chain crosses the membrane as a helical span at residues 112–132 (TVFYIISVLLRIILEVLAFWL). The Extracellular segment spans residues 133 to 175 (QSHLFGFLVDPIFMCDVTGLGKILNVSKCMVPEHFEKTIFLSA). A helical membrane pass occupies residues 176 to 196 (MYTFTIITILLCIAEIFEILF). Topologically, residues 197–207 (RRLGYLNQPMT) are cytoplasmic.

The protein belongs to the connexin family. Beta-type (group I) subfamily. In terms of assembly, a connexon is composed of a hexamer of connexins.

Its subcellular location is the cell membrane. Its function is as follows. Has significant hemichannel activity. However, has only low-efficiency gap junction activity and probably does not function as a gap junction channel in vivo. In Danio rerio (Zebrafish), this protein is Gap junction epsilon-1 protein.